The following is a 371-amino-acid chain: Cytochrome b (371 aa).

Transmembrane regions (helical) follow at residues 25 to 45, 69 to 90, 105 to 125, and 170 to 190; these read FGSMLLTCLALQVLTGFFLAV, WMMQNLHAIGASMFFICIYIHI, WMSGITLLITLMATAFFGYVL, and FFALHFILPFAIISLSSLHII. The heme b site is built by His-75 and His-89. 2 residues coordinate heme b: His-174 and His-188. Residue His-193 participates in a ubiquinone binding. Helical transmembrane passes span 218 to 238, 280 to 300, 312 to 332, and 339 to 358; these read YKDLLLLTLMILFLFIIVSFF, LGGALALVMSIMILFTIPFMH, LSQLMFWTLVSTFITITWAAT, and YIMISQMTATLYFTFFLSIP.

This sequence belongs to the cytochrome b family. The cytochrome bc1 complex contains 3 respiratory subunits (MT-CYB, CYC1 and UQCRFS1), 2 core proteins (UQCRC1 and UQCRC2) and probably 6 low-molecular weight proteins. Heme b is required as a cofactor.

It localises to the mitochondrion inner membrane. Functionally, component of the ubiquinol-cytochrome c reductase complex (complex III or cytochrome b-c1 complex) that is part of the mitochondrial respiratory chain. The b-c1 complex mediates electron transfer from ubiquinol to cytochrome c. Contributes to the generation of a proton gradient across the mitochondrial membrane that is then used for ATP synthesis. The polypeptide is Cytochrome b (MT-CYB) (Simalia amethistina (Amethystine python)).